A 398-amino-acid polypeptide reads, in one-letter code: ATP-dependent RNA helicase RhlB (398 aa).

A Q motif motif is present at residues 9–37 (TRFHDFKLSNELMHAIHDLGFPYCTPIQA). Positions 40–220 (LGYTLRGQDA…KQWTTNPAIV (181 aa)) constitute a Helicase ATP-binding domain. Residue 53–60 (AQTGTGKT) coordinates ATP. Residues 166 to 169 (DEAD) carry the DEAD box motif. The region spanning 243–393 (DKYKLLYNLV…MPPDELLKPV (151 aa)) is the Helicase C-terminal domain.

It belongs to the DEAD box helicase family. RhlB subfamily. As to quaternary structure, component of the RNA degradosome, which is a multiprotein complex involved in RNA processing and mRNA degradation.

Its subcellular location is the cytoplasm. The enzyme catalyses ATP + H2O = ADP + phosphate + H(+). Functionally, DEAD-box RNA helicase involved in RNA degradation. Has RNA-dependent ATPase activity and unwinds double-stranded RNA. The chain is ATP-dependent RNA helicase RhlB from Pseudomonas putida (strain ATCC 47054 / DSM 6125 / CFBP 8728 / NCIMB 11950 / KT2440).